The chain runs to 221 residues: Serine/arginine-rich splicing factor 2 (221 aa).

The 79-residue stretch at Thr14–Tyr92 folds into the RRM domain. Residues Arg91–Ser221 form a disordered region. 2 stretches are compositionally biased toward basic residues: residues Arg117–Ser171 and Ser179–Ser189.

The protein belongs to the splicing factor SR family. In terms of processing, extensively phosphorylated on serine residues in the RS domain.

Its subcellular location is the nucleus. Functionally, necessary for the splicing of pre-mRNA. It is required for formation of the earliest ATP-dependent splicing complex and interacts with spliceosomal components bound to both the 5'- and 3'-splice sites during spliceosome assembly. It also is required for ATP-dependent interactions of both U1 and U2 snRNPs with pre-mRNA. In Gallus gallus (Chicken), this protein is Serine/arginine-rich splicing factor 2 (SRSF2).